We begin with the raw amino-acid sequence, 430 residues long: Probable folylpolyglutamate synthase (430 aa).

37–40 is an ATP binding site; it reads GKET. Position 132 (E132) interacts with Mg(2+). ATP is bound at residue D300.

The protein belongs to the folylpolyglutamate synthase family.

The protein localises to the mitochondrion. It catalyses the reaction (6S)-5,6,7,8-tetrahydrofolyl-(gamma-L-Glu)(n) + L-glutamate + ATP = (6S)-5,6,7,8-tetrahydrofolyl-(gamma-L-Glu)(n+1) + ADP + phosphate + H(+). It participates in cofactor biosynthesis; tetrahydrofolylpolyglutamate biosynthesis. In terms of biological role, conversion of folates to polyglutamate derivatives. This Saccharomyces cerevisiae (strain ATCC 204508 / S288c) (Baker's yeast) protein is Probable folylpolyglutamate synthase (RMA1).